A 192-amino-acid chain; its full sequence is dTTP/UTP pyrophosphatase (192 aa).

Catalysis depends on aspartate 70, which acts as the Proton acceptor.

It belongs to the Maf family. YhdE subfamily. It depends on a divalent metal cation as a cofactor.

It is found in the cytoplasm. It carries out the reaction dTTP + H2O = dTMP + diphosphate + H(+). The catalysed reaction is UTP + H2O = UMP + diphosphate + H(+). In terms of biological role, nucleoside triphosphate pyrophosphatase that hydrolyzes dTTP and UTP. May have a dual role in cell division arrest and in preventing the incorporation of modified nucleotides into cellular nucleic acids. The polypeptide is dTTP/UTP pyrophosphatase (Alkaliphilus oremlandii (strain OhILAs) (Clostridium oremlandii (strain OhILAs))).